The sequence spans 680 residues: Lipase 1 (680 aa).

Residues M1–A34 form the signal peptide. Residues A35–K290 constitute a propeptide that is removed on maturation. Residues K82–G259 form a disordered region. Basic and acidic residues predominate over residues L84–N111. Composition is skewed to polar residues over residues K125 to L138, S162 to E193, and Q204 to E223. A compositionally biased stretch (basic and acidic residues) spans Q224–T234. Positions L235–S246 are enriched in polar residues. S408 acts as the Nucleophile in catalysis. Residue D600 is the Charge relay system of the active site. D638 contributes to the Ca(2+) binding site. H639 functions as the Charge relay system in the catalytic mechanism. Residues D641, D646, and D649 each contribute to the Ca(2+) site.

It belongs to the AB hydrolase superfamily. Lipase family.

It localises to the secreted. The catalysed reaction is a triacylglycerol + H2O = a diacylglycerol + a fatty acid + H(+). This Staphylococcus aureus (strain Mu50 / ATCC 700699) protein is Lipase 1 (lip1).